Consider the following 149-residue polypeptide: Ricin B-like lectin (149 aa).

N-acetylserine is present on Ser2. Positions 21, 24, 39, and 47 each coordinate a carbohydrate. The interval Pro110 to Leu112 is involved in dimerization.

Homodimer. In terms of processing, the N-terminus is blocked.

In terms of biological role, lectin specific for terminal, non-reducing N-acetylgalactosamine (Gal-NAc)-containing carbohydrates including N,N'-diacetyllactosediamine/LDN (GalNAcbeta1-4GlcNAc, LacdiNAc). Specific also for carbohydrates containing N-acetylglucosamine (-GlcNAc) or N-acetyllactosamine (-Galbeta1-4GlcNAc) at the reducing end. Agglutinates human blood group A, AB, B and O erythrocytes with a strong preference for group A. Agglutinates bovine erythrocytes with a very low specificity. Binds carbohydrates bivalently, which is required for its biological activity. Exhibits insecticidal activity against the fruit fly D.melanogaster, mosquito A.aegypti, and amoebozoa A.castellanii. Has anti-nutritional activity against Colorado potato beetle L.decemlineata, and against worm C.elegans. Has antiproliferative activity against human leukemic T-cells. Has an immunostimulatory effect on human antigen-presenting dendritic cells, which are subsequently able to induce efficient T-cell immune responses. The protein is Ricin B-like lectin of Clitocybe nebularis (Clouded agaric).